Here is a 264-residue protein sequence, read N- to C-terminus: MKKLAAGISYQGNNYCGWQSQKNIISIQEYVELALFKFSGEKIKIYCAGRTDAKVHALLQVVHFYTDIKRSYRQWILGVNSYLPYDISIMWVIKVHNNFHARYSAIAKKYLYLIHNNISRSGIFRKYCFNVFISLNINDMKKAAQKLIGKHDFSSFKGSECQSKTTYRVIYYIRINKYKEYIFVEIKANSFLNHMMRNIIGNLIEIGKGKKSKEWMSELLFLKNNKFSIFSADPKGLYLSNVYYPFYFNIPKFNFKLKNFLKIF.

Catalysis depends on Asp52, which acts as the Nucleophile. Tyr110 lines the substrate pocket.

It belongs to the tRNA pseudouridine synthase TruA family. As to quaternary structure, homodimer.

The enzyme catalyses uridine(38/39/40) in tRNA = pseudouridine(38/39/40) in tRNA. Its function is as follows. Formation of pseudouridine at positions 38, 39 and 40 in the anticodon stem and loop of transfer RNAs. In Wigglesworthia glossinidia brevipalpis, this protein is tRNA pseudouridine synthase A.